The primary structure comprises 558 residues: Dihydroxy-acid dehydratase (558 aa).

A Mg(2+)-binding site is contributed by Asp-78. Residue Cys-119 coordinates [2Fe-2S] cluster. Asp-120 and Lys-121 together coordinate Mg(2+). The residue at position 121 (Lys-121) is an N6-carboxylysine. Cys-192 is a [2Fe-2S] cluster binding site. Glu-445 provides a ligand contact to Mg(2+). Ser-471 serves as the catalytic Proton acceptor.

It belongs to the IlvD/Edd family. As to quaternary structure, homodimer. Requires [2Fe-2S] cluster as cofactor. Mg(2+) serves as cofactor.

It carries out the reaction (2R)-2,3-dihydroxy-3-methylbutanoate = 3-methyl-2-oxobutanoate + H2O. It catalyses the reaction (2R,3R)-2,3-dihydroxy-3-methylpentanoate = (S)-3-methyl-2-oxopentanoate + H2O. It participates in amino-acid biosynthesis; L-isoleucine biosynthesis; L-isoleucine from 2-oxobutanoate: step 3/4. It functions in the pathway amino-acid biosynthesis; L-valine biosynthesis; L-valine from pyruvate: step 3/4. In terms of biological role, functions in the biosynthesis of branched-chain amino acids. Catalyzes the dehydration of (2R,3R)-2,3-dihydroxy-3-methylpentanoate (2,3-dihydroxy-3-methylvalerate) into 2-oxo-3-methylpentanoate (2-oxo-3-methylvalerate) and of (2R)-2,3-dihydroxy-3-methylbutanoate (2,3-dihydroxyisovalerate) into 2-oxo-3-methylbutanoate (2-oxoisovalerate), the penultimate precursor to L-isoleucine and L-valine, respectively. This Akkermansia muciniphila (strain ATCC BAA-835 / DSM 22959 / JCM 33894 / BCRC 81048 / CCUG 64013 / CIP 107961 / Muc) protein is Dihydroxy-acid dehydratase.